Here is a 777-residue protein sequence, read N- to C-terminus: Ethylene receptor 4 (777 aa).

Transmembrane regions (helical) follow at residues 49–69 (LLIAASFLSIPLELFYFATCA), 77–97 (AVLHFCAFIVLCGATHLLAAF), and 113–133 (AAKVLAAVASSAAAVSLLTFI). Cu cation is bound by residues Cys88 and His92. The 161-residue stretch at 184–344 (DAHAILRTTA…VVADQAAVAL (161 aa)) folds into the GAF domain. In terms of domain architecture, Histidine kinase spans 387–521 (AMCHAMRRPV…NTESGACRLS (135 aa)). His390 is subject to Phosphohistidine; by autocatalysis. One can recognise a Response regulatory domain in the interval 645–774 (RVLLADDDAM…ALGAQLCRVL (130 aa)). Asp696 is modified (4-aspartylphosphate).

This sequence belongs to the ethylene receptor family. Cu cation serves as cofactor.

It is found in the endoplasmic reticulum membrane. It carries out the reaction ATP + protein L-histidine = ADP + protein N-phospho-L-histidine.. Functionally, ethylene receptor related to bacterial two-component regulators. Acts as a redundant negative regulator of ethylene signaling. In Oryza sativa subsp. indica (Rice), this protein is Ethylene receptor 4.